A 694-amino-acid polypeptide reads, in one-letter code: Elongation factor G (694 aa).

The region spanning 8–287 (EDYRNFGIMA…AVVEFLPAPT (280 aa)) is the tr-type G domain. Residues 17–24 (AHIDAGKT), 86–90 (DTPGH), and 140–143 (NKMD) each bind GTP.

The protein belongs to the TRAFAC class translation factor GTPase superfamily. Classic translation factor GTPase family. EF-G/EF-2 subfamily.

The protein resides in the cytoplasm. Its function is as follows. Catalyzes the GTP-dependent ribosomal translocation step during translation elongation. During this step, the ribosome changes from the pre-translocational (PRE) to the post-translocational (POST) state as the newly formed A-site-bound peptidyl-tRNA and P-site-bound deacylated tRNA move to the P and E sites, respectively. Catalyzes the coordinated movement of the two tRNA molecules, the mRNA and conformational changes in the ribosome. In Brucella melitensis biotype 2 (strain ATCC 23457), this protein is Elongation factor G.